The chain runs to 220 residues: Ribosomal RNA small subunit methyltransferase J (220 aa).

S-adenosyl-L-methionine is bound by residues 55-56 (RD), 71-72 (ER), and Asp-123.

It belongs to the methyltransferase superfamily. RsmJ family.

The protein localises to the cytoplasm. The catalysed reaction is guanosine(1516) in 16S rRNA + S-adenosyl-L-methionine = N(2)-methylguanosine(1516) in 16S rRNA + S-adenosyl-L-homocysteine + H(+). Its function is as follows. Specifically methylates the guanosine in position 1516 of 16S rRNA. This is Ribosomal RNA small subunit methyltransferase J from Rhodopseudomonas palustris (strain BisB5).